Consider the following 290-residue polypeptide: MKFAIFGNTYQAKKSSHAATLFKLLEKHGAEICVCREFHRFLKSDLKLNVKADDLFDENNFDADMVISIGGDGTFLKAARRVGNKGIPILGINTGRLGFLADVSPEEMEETIEEVYQNHYTVEERSVLQLLCDDKHLQNSPYALNEIAILKRDSSSMISIRTAINGAHLTTYQADGLIIATPTGSTAYSLSVGGPIIVPHSKTIAITPVAPHSLNVRPIVICDDWEITLDVESRSHNFLVAIDGSSETCKETTRLTIRRADYSIKVVKRFYHIFFDTLRTKMMWGADSRV.

The active-site Proton acceptor is the aspartate 72. NAD(+) contacts are provided by residues 72–73, lysine 77, 145–146, aspartate 175, 186–191, and alanine 210; these read DG, NE, and TAYSLS.

Belongs to the NAD kinase family. A divalent metal cation serves as cofactor.

Its subcellular location is the cytoplasm. It catalyses the reaction NAD(+) + ATP = ADP + NADP(+) + H(+). In terms of biological role, involved in the regulation of the intracellular balance of NAD and NADP, and is a key enzyme in the biosynthesis of NADP. Catalyzes specifically the phosphorylation on 2'-hydroxyl of the adenosine moiety of NAD to yield NADP. This is NAD kinase from Bacteroides fragilis (strain YCH46).